The primary structure comprises 481 residues: Ribosomal protein uS12 methylthiotransferase RimO (481 aa).

The MTTase N-terminal domain occupies 38 to 148; it reads NRIGFVSLGC…VLKHVHKYVP (111 aa). The [4Fe-4S] cluster site is built by Cys-47, Cys-83, Cys-112, Cys-180, Cys-184, and Cys-187. In terms of domain architecture, Radical SAM core spans 166-403; that stretch reads LTPKHYAYLK…MEVQAEISAE (238 aa). One can recognise a TRAM domain in the interval 406–472; the sequence is ARFVGRTMDI…EHDLWAELVD (67 aa).

The protein belongs to the methylthiotransferase family. RimO subfamily. The cofactor is [4Fe-4S] cluster.

It localises to the cytoplasm. The catalysed reaction is L-aspartate(89)-[ribosomal protein uS12]-hydrogen + (sulfur carrier)-SH + AH2 + 2 S-adenosyl-L-methionine = 3-methylsulfanyl-L-aspartate(89)-[ribosomal protein uS12]-hydrogen + (sulfur carrier)-H + 5'-deoxyadenosine + L-methionine + A + S-adenosyl-L-homocysteine + 2 H(+). Functionally, catalyzes the methylthiolation of an aspartic acid residue of ribosomal protein uS12. In Shewanella oneidensis (strain ATCC 700550 / JCM 31522 / CIP 106686 / LMG 19005 / NCIMB 14063 / MR-1), this protein is Ribosomal protein uS12 methylthiotransferase RimO.